We begin with the raw amino-acid sequence, 344 residues long: 4-dimethylallyltryptophan N-methyltransferase easF (344 aa).

It belongs to the methyltransferase superfamily. Homodimer.

The enzyme catalyses 4-(3-methylbut-2-enyl)-L-tryptophan + S-adenosyl-L-methionine = 4-(3-methylbut-2-enyl)-L-abrine + S-adenosyl-L-homocysteine + H(+). It functions in the pathway alkaloid biosynthesis; ergot alkaloid biosynthesis. 4-dimethylallyltryptophan N-methyltransferase; part of the gene cluster that mediates the biosynthesis of fungal ergot alkaloid. DmaW catalyzes the first step of ergot alkaloid biosynthesis by condensing dimethylallyl diphosphate (DMAP) and tryptophan to form 4-dimethylallyl-L-tryptophan. The second step is catalyzed by the methyltransferase easF that methylates 4-dimethylallyl-L-tryptophan in the presence of S-adenosyl-L-methionine, resulting in the formation of 4-dimethylallyl-L-abrine. The catalase easC and the FAD-dependent oxidoreductase easE then transform 4-dimethylallyl-L-abrine to chanoclavine-I which is further oxidized by easD in the presence of NAD(+), resulting in the formation of chanoclavine-I aldehyde. Agroclavine dehydrogenase easG then mediates the conversion of chanoclavine-I aldehyde to agroclavine via a non-enzymatic adduct reaction: the substrate is an iminium intermediate that is formed spontaneously from chanoclavine-I aldehyde in the presence of glutathione. The presence of easA is not required to complete this reaction. Further conversion of agroclavine to paspalic acid is a two-step process involving oxidation of agroclavine to elymoclavine and of elymoclavine to paspalic acid, the second step being performed by the elymoclavine oxidase cloA. Paspalic acid is then further converted to D-lysergic acid. Ergopeptines are assembled from D-lysergic acid and three different amino acids by the D-lysergyl-peptide-synthetases composed each of a monomudular and a trimodular nonribosomal peptide synthetase subunit. LpsB and lpsC encode the monomodular subunits responsible for D-lysergic acid activation and incorporation into the ergopeptine backbone. LpsA1 and A2 subunits encode the trimodular nonribosomal peptide synthetase assembling the tripeptide portion of ergopeptines. LpsA1 is responsible for formation of the major ergopeptine, ergotamine, and lpsA2 for alpha-ergocryptine, the minor ergopeptine of the total alkaloid mixture elaborated by C.purpurea. D-lysergyl-tripeptides are assembled by the nonribosomal peptide synthetases and released as N-(D-lysergyl-aminoacyl)-lactams. Cyclolization of the D-lysergyl-tripeptides is performed by the Fe(2+)/2-ketoglutarate-dependent dioxygenase easH which introduces a hydroxyl group into N-(D-lysergyl-aminoacyl)-lactam at alpha-C of the aminoacyl residue followed by spontaneous condensation with the terminal lactam carbonyl group. The protein is 4-dimethylallyltryptophan N-methyltransferase easF of Claviceps purpurea (strain 20.1) (Ergot fungus).